The sequence spans 888 residues: Transmembrane channel-like protein 2 (888 aa).

The segment at 1 to 128 is disordered; the sequence is MSPQLKSLDE…SLGSSVSTGD (128 aa). The Cytoplasmic portion of the chain corresponds to 1–228; the sequence is MSPQLKSLDE…KIKDIESHFG (228 aa). Basic and acidic residues-rich tracts occupy residues 7–16, 32–44, and 87–110; these read SLDEEGDKSA, DGHRAQSSRKDPA, and RTSLKEQRASPKKEREALRKEAGK. Residues 117–128 are compositionally biased toward polar residues; the sequence is STSLGSSVSTGD. Residues 229–266 form a helical membrane-spanning segment; the sequence is SSVASYFIFLRWMYGVNLVLFGLIFGLVIIPEVLMGMP. The Extracellular segment spans residues 267–317; sequence YGSIPRKTVPRAEEERAMDFSVLWDFEGYIKYSALFYGYYNNQRTIGWLRY. Residues 318-350 form a helical membrane-spanning segment; that stretch reads RLPMAYFMVGVSVFGYSLMIVIRSMASNTQGST. Residues 351–406 are Cytoplasmic-facing; sequence SEGDSDSFTFSFKMFTSWDYLIGNSETADNKYVSITTSFKESIVDEQESNKEGNIH. The helical transmembrane segment at 407–437 threads the bilayer; sequence LTRFLRVLANFLILCCLCGSGYLIYFVVKRS. Topologically, residues 438 to 447 are extracellular; that stretch reads QEFSKMQNVS. The helical transmembrane segment at 448-475 threads the bilayer; that stretch reads WYERNEVEIVMSLLGMFCPPLFETIAAL. The Cytoplasmic portion of the chain corresponds to 476–479; the sequence is ENYH. Residues 480–514 form a helical membrane-spanning segment; it reads PRTGLKWQLGRIFALFLGNLYTFLLALMDDVHLKL. Residues 515–556 are Extracellular-facing; it reads SNEEKIKNITHWTLFNYYNSSGGNESVPRPPPHPADVPRGSC. The chain crosses the membrane as a helical span at residues 557–594; that stretch reads WETAVGIEFMRLTVSDMLVTYLTILVGDFLRACFVRFM. The Cytoplasmic segment spans residues 595 to 613; sequence NHCWCWDLEAGFPSYAEFD. The chain crosses the membrane as a helical span at residues 614 to 634; sequence ISGNVLGLIFNQGMIWMGSFY. At 635-637 the chain is on the extracellular side; the sequence is APG. A helical transmembrane segment spans residues 638–660; sequence LVGINVLRLLTSMYFQCWAVMSS. The Cytoplasmic portion of the chain corresponds to 661 to 674; sequence NVPHERVFKASRSN. Residues 675 to 698 form a helical membrane-spanning segment; it reads NFYMGLLLLVLFLSLLPVAYTVMS. Residues 699 to 741 lie on the Extracellular side of the membrane; sequence LPPSFDCGPFSGKNRMYDVLHETIENDFPKFLGKIFAFLANPG. A helical membrane pass occupies residues 742–775; it reads LIIPAILLMFLAIYYLNSVSKSLSRANAQLRKKI. Over 776–888 the chain is Cytoplasmic; the sequence is QALREVEKNH…SGKRTQRPHN (113 aa). The segment at 813-888 is disordered; that stretch reads LTKEEPTSHS…SGKRTQRPHN (76 aa). 2 stretches are compositionally biased toward polar residues: residues 836-851 and 866-881; these read PHTSSTEGGASPSTSW and GQPQSQTYTGRSPSGK.

Belongs to the TMC family. Forms the MET channel composed of TMC dimer (TMC1 or TMC2), TMIE, TOMT, CIB (CIB2 or CIB3), LHFPL5 and PDH15. The interaction of TMC1 and TMC2 with TOMT is required for the transportation of TMC1/2 into the stereocilia of hair cells. Interacts (via N-terminus) with both isoforms CD1 and CD3 of PCDH15. Can form a heterodimer with TMC1, TMC5 or TMC7. Inner ear and testis. Expressed in cochlear inner and outer hair cells and vestibular organ hair cells.

The protein resides in the cell membrane. It catalyses the reaction Ca(2+)(in) = Ca(2+)(out). In terms of biological role, pore-forming subunit of the mechanotransducer (MET) non-selective cation channel complex located at the tips of stereocilia of cochlear hair cells and that mediates sensory transduction in the auditory system. The MET complex is composed of two dimeric pore-forming ion-conducting transmembrane TMC (TMC1 or TMC2) subunits, several auxiliary proteins including LHFPL5, TMIE, CIB2/3 and TOMT, the tip-link PCDH15, and possibly the PIEZO subunits. MET channel is activated by tension in the tip-link extending from the side wall of one stereocilium to the tip of the adjacent shorter stereocilium, where the channel is located. TMC2 MET channel is highly permeable to calcium and likely transports monovalent cations. Also involved in vestibular hair cell transduction current of the mammalian inner ear. This Mus musculus (Mouse) protein is Transmembrane channel-like protein 2.